The following is a 1717-amino-acid chain: PH domain leucine-rich repeat-containing protein phosphatase 1 (1717 aa).

The residue at position 1 (methionine 1) is an N-acetylmethionine. Disordered regions lie at residues 1 to 25 (MEPA…SAPA), 41 to 118 (LAAA…GANS), 136 to 156 (AASS…GAAG), and 252 to 470 (PGAA…PPPT). Residues 98–110 (APQPIAGGAAPVP) are compositionally biased toward low complexity. Over residues 262 to 274 (EPPPEAGPRLAPP) the composition is skewed to pro residues. 2 stretches are compositionally biased toward low complexity: residues 313 to 325 (SRRA…DSSP) and 333 to 345 (PVSS…PVVS). Serine 317 is modified (phosphoserine). Composition is skewed to polar residues over residues 346 to 358 (DTES…SAES) and 408 to 417 (QTASSPQPQQ). Serine 412 carries the post-translational modification Phosphoserine. A PH domain is found at 536-636 (RIQLSGMYNV…WLRQVSKVAS (101 aa)). 21 LRR repeats span residues 638-659 (RISS…LFYS), 661-682 (DLTH…PAAR), 692-712 (KLKS…AVCS), 715-736 (TLAE…VGVM), 738-760 (NLQT…ENMK), 761-783 (QLSY…EKLT), 784-804 (AVDK…QALR), 808-831 (HIKH…DFLQ), 832-853 (HVTQ…IFNN), 873-894 (FLKA…PVPN), 895-916 (YLSY…VCES), 918-939 (KLEV…LFCN), 941-962 (SLRK…LERT), 963-984 (SVEV…LLMK), 987-1008 (SLRF…TLSE), 1013-1033 (ILQE…PLLT), 1037-1058 (HLKI…KMAK), 1061-1082 (ELEE…IMNC), 1084-1105 (RMHT…MQLP), 1106-1127 (EIKC…ENLP), and 1129-1150 (KLQE…TLEL). Residues 1076–1205 (PTTIMNCRRM…NNFCDNREAL (130 aa)) are interaction with NHERF1. The region spanning 1175–1422 (SHGYTEASGV…DSISAVVVQL (248 aa)) is the PPM-type phosphatase domain. 4 residues coordinate Mn(2+): aspartate 1210, glycine 1211, lysine 1374, and aspartate 1413. Disordered regions lie at residues 1458 to 1510 (DRPS…SPAY) and 1673 to 1717 (EVKE…DTPL). The span at 1468–1489 (SSSSGMASEISSELSTSEMSSE) shows a compositional bias: low complexity. The PDZ-binding; required for interaction with NHERF1 motif lies at 1715–1717 (TPL).

Interacts with the nucleotide free form of K-Ras (KRAS) via its LRR repeats. Interacts with AKT2, AKT3, PRKCB isoform beta-II, STK4, RPS6KB1, RAF1. Isoform 1 (predominantly) and isoform 2 interact with BRAP. Interacts with FKBP5; FKBP5 acts as a scaffold for PHLPP1 and Akt. Interacts with SCRIB; SCRIB acts as a scaffold for PHLPP1 and Akt. Interacts with NHERF1; NHERF1 scaffolds a heterotrimeric complex with PTEN at the plasma membrane. Interacts with WDR48 and USP12. It depends on Mn(2+) as a cofactor. As to expression, in colorectal cancer tissue, expression is highest in the surface epithelium of normal colonic mucosa adjacent to the cancer tissue but is largely excluded from the crypt bases. Expression is lost or significantly decreased in 78% of tested tumors (at protein level). Ubiquitously expressed in non-cancerous tissues.

It localises to the cytoplasm. It is found in the membrane. Its subcellular location is the nucleus. The protein resides in the cell membrane. It catalyses the reaction O-phospho-L-seryl-[protein] + H2O = L-seryl-[protein] + phosphate. It carries out the reaction O-phospho-L-threonyl-[protein] + H2O = L-threonyl-[protein] + phosphate. Insensitive to okadaic acid. Deubiquitination by WDR48-USP12 complex positively regulates PHLPP1 stability. Its function is as follows. Protein phosphatase involved in regulation of Akt and PKC signaling. Mediates dephosphorylation in the C-terminal domain hydrophobic motif of members of the AGC Ser/Thr protein kinase family; specifically acts on 'Ser-473' of AKT2 and AKT3, 'Ser-660' of PRKCB and 'Ser-657' of PRKCA. Isoform 2 seems to have a major role in regulating Akt signaling in hippocampal neurons. Akt regulates the balance between cell survival and apoptosis through a cascade that primarily alters the function of transcription factors that regulate pro- and antiapoptotic genes. Dephosphorylation of 'Ser-473' of Akt triggers apoptosis and suppression of tumor growth. Dephosphorylation of PRKCA and PRKCB leads to their destabilization and degradation. Dephosphorylates STK4 on 'Thr-387' leading to STK4 activation and apoptosis. Dephosphorylates RPS6KB1 and is involved in regulation of cap-dependent translation. Inhibits cancer cell proliferation and may act as a tumor suppressor. Dephosphorylates RAF1 inhibiting its kinase activity. May act as a negative regulator of K-Ras signaling in membrane rafts. Involved in the hippocampus-dependent long-term memory formation. Involved in circadian control by regulating the consolidation of circadian periodicity after resetting. Involved in development and function of regulatory T-cells. The polypeptide is PH domain leucine-rich repeat-containing protein phosphatase 1 (PHLPP1) (Homo sapiens (Human)).